A 240-amino-acid chain; its full sequence is MSSLTLFIFFLQLFIFTSSVSGISIKRCTEEENNTWEIEVGLCIQTENFRAIKTGCYKIQGPGGLLTEGNGFKIFAHDDCSKEETQNNFILDSVNKAVYALGKYVYMEISTSNITTLYSLPQCAKRISLSISCDQVTTEMKSYVESVSFKDYDLEFVITTDISCVKHVSSSVIVRNECEKKYISTGKKIFGFNNKIDCSAVKFSEHVNYLKTCSVGKFDRKKYYEHQHNYIKKIFHHNEL.

Belongs to the poxviruses B9 family.

This chain is T4 protein, found in Sheeppox virus (strain KS-1) (SPPV).